The following is a 92-amino-acid chain: Small ribosomal subunit protein uS19 (92 aa).

The protein belongs to the universal ribosomal protein uS19 family.

Its function is as follows. Protein S19 forms a complex with S13 that binds strongly to the 16S ribosomal RNA. This Malacoplasma penetrans (strain HF-2) (Mycoplasma penetrans) protein is Small ribosomal subunit protein uS19.